The following is a 151-amino-acid chain: Flagellar assembly factor FliW (151 aa).

This sequence belongs to the FliW family. Interacts with translational regulator CsrA and flagellin(s).

The protein resides in the cytoplasm. In terms of biological role, acts as an anti-CsrA protein, binds CsrA and prevents it from repressing translation of its target genes, one of which is flagellin. Binds to flagellin and participates in the assembly of the flagellum. This chain is Flagellar assembly factor FliW, found in Lachnospira eligens (strain ATCC 27750 / DSM 3376 / VPI C15-48 / C15-B4) (Eubacterium eligens).